We begin with the raw amino-acid sequence, 600 residues long: Torsin-1A-interacting protein 1 (600 aa).

Residues 1 to 14 are compositionally biased toward basic and acidic residues; that stretch reads MAGEGQRAEPEREG. Disordered regions lie at residues 1–261 and 310–346; these read MAGE…YKES and MRSI…QPKS. At 1–354 the chain is on the nuclear side; sequence MAGEGQRAEP…KSVSSVKTKR (354 aa). Ser-61 is subject to Phosphoserine. Basic and acidic residues-rich tracts occupy residues 71–81, 91–102, and 116–125; these read FEPRAAKEKAR, FRPDSAKEEVRE, and RLHEAEEMQT. Residues Ser-137, Ser-145, Ser-156, Ser-158, Ser-159, and Ser-189 each carry the phosphoserine modification. The span at 192–203 shows a compositional bias: low complexity; it reads PLISLRRPPLRS. Residues 219 to 232 show a composition bias toward acidic residues; that stretch reads EEGETEENDQDSFD. Thr-223 bears the Phosphothreonine mark. 3 positions are modified to phosphoserine: Ser-230, Ser-233, and Ser-244. Residues 247-261 show a composition bias toward polar residues; that stretch reads SGDQTTRSSSQYKES. Ser-322 bears the Phosphoserine mark. Lys-325 is covalently cross-linked (Glycyl lysine isopeptide (Lys-Gly) (interchain with G-Cter in SUMO2)). Residues 325-346 show a composition bias toward polar residues; that stretch reads KSELGNQSPSTSNQQMTGQPKS. Phosphoserine is present on Ser-332. Residues 355–371 form a helical membrane-spanning segment; sequence YWPFAVIAALLIGGFLY. The Perinuclear space segment spans residues 372 to 600; that stretch reads TRPPEAETTA…ENDLKKGICL (229 aa). The interaction with TOR1A stretch occupies residues 373–600; sequence RPPEAETTAV…ENDLKKGICL (228 aa). Residues 376–452 are a coiled coil; that stretch reads EAETTAVQEF…SEQIADAYSS (77 aa). An N-linked (GlcNAc...) asparagine glycan is attached at Asn-416.

This sequence belongs to the TOR1AIP family. Interacts with ATP1B4. Interacts with TOR1A (ATP-bound). Interacts with TOR1B, TOR2A and TOR3A. Interacts with VIM.

It is found in the nucleus inner membrane. In terms of biological role, required for nuclear membrane integrity. Induces TOR1A and TOR1B ATPase activity and is required for their location on the nuclear membrane. Binds to A- and B-type lamins. Possible role in membrane attachment and assembly of the nuclear lamina. This is Torsin-1A-interacting protein 1 (TOR1AIP1) from Bos taurus (Bovine).